Here is a 504-residue protein sequence, read N- to C-terminus: Peptidyl-prolyl cis-trans isomerase CYP57 (504 aa).

The residue at position 2 (Ser2) is an N-acetylserine. Residues 16 to 167 (IVNTTHGPID…DPAPKILSVE (152 aa)) form the PPIase cyclophilin-type domain. The stretch at 204-274 (NLLSFGEEAE…AKKEAAQKDK (71 aa)) forms a coiled coil. 3 stretches are compositionally biased toward basic and acidic residues: residues 237–275 (RLLK…KDKS), 344–354 (EDEKPRMEKLS), and 364–374 (AKAEHMEKGDT). Disordered stretches follow at residues 237 to 374 (RLLK…KGDT), 416 to 441 (AKPF…KEED), and 482 to 504 (EKFN…KSLA). The span at 416-434 (AKPFTSSNEPVVLTSSSEP) shows a compositional bias: polar residues. Residues 494–504 (REREWSGKSLA) are compositionally biased toward basic and acidic residues.

Belongs to the cyclophilin-type PPIase family. In terms of tissue distribution, ubiquitous.

The protein localises to the nucleus. Its subcellular location is the cytoplasm. It catalyses the reaction [protein]-peptidylproline (omega=180) = [protein]-peptidylproline (omega=0). Its function is as follows. PPIases accelerate the folding of proteins. It catalyzes the cis-trans isomerization of proline imidic peptide bonds in oligopeptides. Involved in plant response to pathogen infection by increasing PAD4 expression in absence of EDS1 up-regulation. In Arabidopsis thaliana (Mouse-ear cress), this protein is Peptidyl-prolyl cis-trans isomerase CYP57 (CYP57).